The following is a 199-amino-acid chain: uncharacterized protein (199 aa).

This is an uncharacterized protein from Rattus norvegicus (Rat).